The sequence spans 164 residues: ATP synthase subunit b (164 aa).

The chain crosses the membrane as a helical span at residues 4–24; sequence LGINPTLFIAQLINFLLLIFI.

The protein belongs to the ATPase B chain family. F-type ATPases have 2 components, F(1) - the catalytic core - and F(0) - the membrane proton channel. F(1) has five subunits: alpha(3), beta(3), gamma(1), delta(1), epsilon(1). F(0) has four main subunits: a(1), b(2) and c(10-14). The alpha and beta chains form an alternating ring which encloses part of the gamma chain. F(1) is attached to F(0) by a central stalk formed by the gamma and epsilon chains, while a peripheral stalk is formed by the delta and b chains.

The protein resides in the cell membrane. Its function is as follows. F(1)F(0) ATP synthase produces ATP from ADP in the presence of a proton or sodium gradient. F-type ATPases consist of two structural domains, F(1) containing the extramembraneous catalytic core and F(0) containing the membrane proton channel, linked together by a central stalk and a peripheral stalk. During catalysis, ATP synthesis in the catalytic domain of F(1) is coupled via a rotary mechanism of the central stalk subunits to proton translocation. In terms of biological role, component of the F(0) channel, it forms part of the peripheral stalk, linking F(1) to F(0). This is ATP synthase subunit b from Chloroflexus aurantiacus (strain ATCC 29366 / DSM 635 / J-10-fl).